An 87-amino-acid chain; its full sequence is Small ribosomal subunit protein uS17 (87 aa).

It belongs to the universal ribosomal protein uS17 family. Part of the 30S ribosomal subunit.

Functionally, one of the primary rRNA binding proteins, it binds specifically to the 5'-end of 16S ribosomal RNA. The chain is Small ribosomal subunit protein uS17 from Alkalilimnicola ehrlichii (strain ATCC BAA-1101 / DSM 17681 / MLHE-1).